The primary structure comprises 402 residues: Adenylyltransferase and sulfurtransferase MOCS3 (402 aa).

ATP-binding positions include glycine 47, aspartate 68, 75-79 (DNLHR), lysine 92, and 136-137 (DN). Zn(2+)-binding residues include cysteine 178 and cysteine 181. Residue cysteine 195 is the Glycyl thioester intermediate; for adenylyltransferase activity of the active site. Zn(2+) contacts are provided by cysteine 253 and cysteine 256. The Rhodanese domain occupies 303 to 400 (AARKQFLLDT…WALKINDEFP (98 aa)). The active-site Cysteine persulfide intermediate; for sulfurtransferase activity is the cysteine 359.

The protein in the N-terminal section; belongs to the HesA/MoeB/ThiF family. UBA4 subfamily. Zn(2+) is required as a cofactor.

The protein localises to the cytoplasm. It localises to the cytosol. It carries out the reaction [molybdopterin-synthase sulfur-carrier protein]-C-terminal Gly-Gly + ATP + H(+) = [molybdopterin-synthase sulfur-carrier protein]-C-terminal Gly-Gly-AMP + diphosphate. The enzyme catalyses [molybdopterin-synthase sulfur-carrier protein]-C-terminal Gly-Gly-AMP + S-sulfanyl-L-cysteinyl-[cysteine desulfurase] + AH2 = [molybdopterin-synthase sulfur-carrier protein]-C-terminal-Gly-aminoethanethioate + L-cysteinyl-[cysteine desulfurase] + A + AMP + 2 H(+). It participates in tRNA modification; 5-methoxycarbonylmethyl-2-thiouridine-tRNA biosynthesis. The protein operates within cofactor biosynthesis; molybdopterin biosynthesis. Its function is as follows. Plays a central role in 2-thiolation of mcm(5)S(2)U at tRNA wobble positions of cytosolic tRNA(Lys), tRNA(Glu) and tRNA(Gln). Also essential during biosynthesis of the molybdenum cofactor. Acts by mediating the C-terminal thiocarboxylation of sulfur carriers URM1 and MOCS2A. Its N-terminus first activates URM1 and MOCS2A as acyl-adenylates (-COAMP), then the persulfide sulfur on the catalytic cysteine is transferred to URM1 and MOCS2A to form thiocarboxylation (-COSH) of their C-terminus. The reaction probably involves hydrogen sulfide that is generated from the persulfide intermediate and that acts as a nucleophile towards URM1 and MOCS2A. Subsequently, a transient disulfide bond is formed. Does not use thiosulfate as sulfur donor; NFS1 probably acting as a sulfur donor for thiocarboxylation reactions. This Caenorhabditis briggsae protein is Adenylyltransferase and sulfurtransferase MOCS3.